We begin with the raw amino-acid sequence, 228 residues long: MSKLLFLSLALWASRSPGYTETALVALSQPRVQCHASRYPVAVDCSWTPLQAPNSTRSTSFIATYRLGVATQQQSQPCLQRSPQASRCTIPDVHLFSTVPYMLNVTAVHPGGASSSLLAFVAERIIKPDPPEGVRLRTAGQRLQVLWHPPASWPFPDIFSLKYRLRYRRRGASHFRQVGPIEATTFTLRNSKPHAKYCIQVSAQDLTDYGKPSDWSLPGQVESAPHKP.

An N-terminal signal peptide occupies residues 1–18 (MSKLLFLSLALWASRSPG). Fibronectin type-III domains are found at residues 26 to 124 (ALSQ…VAER) and 127 to 224 (KPDP…VESA). Residues Asn54 and Asn104 are each glycosylated (N-linked (GlcNAc...) asparagine).

The protein belongs to the type I cytokine receptor family. Type 3 subfamily. Heterodimer with IL27/IL27A; not disulfide-linked. This heterodimer is known as interleukin IL-27. Heterodimer with IL12A; not disulfide-linked. This heterodimer is known as interleukin IL-35. Interacts with SQSTM1.

The protein localises to the secreted. Its function is as follows. Associates with IL27 to form the IL-27 interleukin, a heterodimeric cytokine which functions in innate immunity. IL-27 has pro- and anti-inflammatory properties, that can regulate T-helper cell development, suppress T-cell proliferation, stimulate cytotoxic T-cell activity, induce isotype switching in B-cells, and that has diverse effects on innate immune cells. Among its target cells are CD4 T-helper cells which can differentiate in type 1 effector cells (TH1), type 2 effector cells (TH2) and IL17 producing helper T-cells (TH17). It drives rapid clonal expansion of naive but not memory CD4 T-cells. It also strongly synergizes with IL-12 to trigger interferon-gamma/IFN-gamma production of naive CD4 T-cells, binds to the cytokine receptor WSX-1/TCCR. Another important role of IL-27 is its antitumor activity as well as its antiangiogenic activity with activation of production of antiangiogenic chemokines. This chain is Interleukin-27 subunit beta (Ebi3), found in Mus musculus (Mouse).